A 476-amino-acid chain; its full sequence is PTS system N-acetylmuramic acid-specific EIIBC component (476 aa).

In terms of domain architecture, PTS EIIB type-1 spans 1–89; it reads MATIDNAMIH…KASLGDNMSS (89 aa). The Phosphocysteine intermediate; for EIIB activity role is filled by Cys28. One can recognise a PTS EIIC type-1 domain in the interval 116 to 476; that stretch reads AKFATIFTPL…FFATKDVDLS (361 aa). The next 10 helical transmembrane spans lie at 118 to 138, 160 to 180, 186 to 206, 220 to 240, 265 to 285, 304 to 324, 337 to 357, 371 to 391, 396 to 416, and 443 to 463; these read FATI…LLGL, LIAY…ILIG, AFGG…LGYN, FFGL…AAIV, TLLI…VYLF, VLAG…FVPV, LFPV…ALYF, GAII…VTLP, FITA…IAYL, and VLPA…TGFI.

It is found in the cell inner membrane. It carries out the reaction N-acetyl-beta-D-muramate(out) + N(pros)-phospho-L-histidyl-[protein] = N-acetyl-beta-D-muramate 6-phosphate(in) + L-histidyl-[protein]. Functionally, the phosphoenolpyruvate-dependent sugar phosphotransferase system (sugar PTS), a major carbohydrate active transport system, catalyzes the phosphorylation of incoming sugar substrates concomitantly with their translocation across the cell membrane. This system is involved in N-acetylmuramic acid (MurNAc) transport, yielding cytoplasmic MurNAc-6-P. Is also able to take up anhydro-N-acetylmuramic acid (anhMurNAc), but cannot phosphorylate the carbon 6, probably because of the 1,6-anhydro ring. This is PTS system N-acetylmuramic acid-specific EIIBC component (murP) from Pasteurella multocida (strain Pm70).